Reading from the N-terminus, the 499-residue chain is UDP-N-acetylmuramoyl-L-alanyl-D-glutamate--2,6-diaminopimelate ligase (499 aa).

UDP-N-acetyl-alpha-D-muramoyl-L-alanyl-D-glutamate is bound by residues L30 and S32. Residue 122-128 (GTNGKTT) coordinates ATP. UDP-N-acetyl-alpha-D-muramoyl-L-alanyl-D-glutamate contacts are provided by residues 164 to 165 (TT), S191, Q197, and R199. N6-carboxylysine is present on K231. Residues R397, 421 to 424 (DNPR), G472, and E476 contribute to the meso-2,6-diaminopimelate site. A Meso-diaminopimelate recognition motif motif is present at residues 421-424 (DNPR).

It belongs to the MurCDEF family. MurE subfamily. Mg(2+) is required as a cofactor. In terms of processing, carboxylation is probably crucial for Mg(2+) binding and, consequently, for the gamma-phosphate positioning of ATP.

It is found in the cytoplasm. It carries out the reaction UDP-N-acetyl-alpha-D-muramoyl-L-alanyl-D-glutamate + meso-2,6-diaminopimelate + ATP = UDP-N-acetyl-alpha-D-muramoyl-L-alanyl-gamma-D-glutamyl-meso-2,6-diaminopimelate + ADP + phosphate + H(+). The protein operates within cell wall biogenesis; peptidoglycan biosynthesis. Functionally, catalyzes the addition of meso-diaminopimelic acid to the nucleotide precursor UDP-N-acetylmuramoyl-L-alanyl-D-glutamate (UMAG) in the biosynthesis of bacterial cell-wall peptidoglycan. This Blochmanniella floridana protein is UDP-N-acetylmuramoyl-L-alanyl-D-glutamate--2,6-diaminopimelate ligase.